The following is a 54-amino-acid chain: Large ribosomal subunit protein bL33A (54 aa).

The protein belongs to the bacterial ribosomal protein bL33 family.

The polypeptide is Large ribosomal subunit protein bL33A (Streptomyces avermitilis (strain ATCC 31267 / DSM 46492 / JCM 5070 / NBRC 14893 / NCIMB 12804 / NRRL 8165 / MA-4680)).